The primary structure comprises 389 residues: Phosphatidylglycerol--prolipoprotein diacylglyceryl transferase (389 aa).

Transmembrane regions (helical) follow at residues 28–48 (IIVA…LIYF), 58–78 (FFIF…YFLI), 98–118 (LAIQ…FNVF), and 148–168 (ISVF…QAIG). R169 serves as a coordination point for a 1,2-diacyl-sn-glycero-3-phospho-(1'-sn-glycerol). 3 consecutive transmembrane segments (helical) span residues 220 to 240 (IPLF…IYFV), 281 to 301 (IVFS…CQTL), and 309 to 329 (FWTY…TTLF).

Belongs to the Lgt family.

The protein localises to the cell membrane. The catalysed reaction is L-cysteinyl-[prolipoprotein] + a 1,2-diacyl-sn-glycero-3-phospho-(1'-sn-glycerol) = an S-1,2-diacyl-sn-glyceryl-L-cysteinyl-[prolipoprotein] + sn-glycerol 1-phosphate + H(+). It participates in protein modification; lipoprotein biosynthesis (diacylglyceryl transfer). Its function is as follows. Catalyzes the transfer of the diacylglyceryl group from phosphatidylglycerol to the sulfhydryl group of the N-terminal cysteine of a prolipoprotein, the first step in the formation of mature lipoproteins. This chain is Phosphatidylglycerol--prolipoprotein diacylglyceryl transferase, found in Mycoplasma pneumoniae (strain ATCC 29342 / M129 / Subtype 1) (Mycoplasmoides pneumoniae).